A 693-amino-acid chain; its full sequence is Sodium-dependent dopamine transporter (693 aa).

At 1–56 (MSEGRCSVAHMSSVVAPAKEANAMGPKAVELVLVKEQNGVQLTNSTLLNPPQSPTE) the chain is on the cytoplasmic side. Residues 57-95 (AQDRETWSKKADFLLSVIGFAVDLANVWRFPYLCYKNGG) form a discontinuously helical membrane-spanning segment. Glycine 75, alanine 77, valine 78, aspartate 79, and asparagine 82 together coordinate Na(+). A dopamine-binding site is contributed by aspartate 79. A run of 2 helical transmembrane segments spans residues 96–127 (GAFLVPYLFFMVVAGVPLFYMELALGQFNREG) and 128–171 (AAGV…LSSF). Serine 149 and glycine 153 together coordinate dopamine. Over 172-233 (TTELPWTHCN…SQGIDDLGPP (62 aa)) the chain is Extracellular. Residues cysteine 180 and cysteine 189 are joined by a disulfide bond. Residues asparagine 181, asparagine 196, and asparagine 202 are each glycosylated (N-linked (GlcNAc...) asparagine). 2 consecutive transmembrane segments (helical) span residues 234–253 (RWQLTSCLVLVIVLLYFSLW) and 254–284 (KGVKTSGKVVWITATMPYVVLFALLLRGITL). The Extracellular portion of the chain corresponds to 285-303 (PGAVDAIRAYLSVDFHRLC). Residues 304-332 (EASVWIDAAIQICFSLGVGLGVLIAFSSY) traverse the membrane as a discontinuously helical segment. Glutamine 314 is a chloride binding site. Residue phenylalanine 317 participates in dopamine binding. Serine 318 and asparagine 350 together coordinate Na(+). Serine 318 contributes to the chloride binding site. The helical transmembrane segment at 333–373 (NKFTNNCYRDAIITTSVNSLTSFSSGFVVFSFLGYMAQKHS) threads the bilayer. Serine 354 is a binding site for chloride. Residues 374 to 397 (VPIGDVAKDGPGLIFIIYPEALAT) are Extracellular-facing. 3 helical membrane-spanning segments follow: residues 398–439 (LPLS…QLLH), 440–463 (RHRELFTLLVVLATFLLSLFCVTN), and 464–496 (GGIYVFTLLDHFAAGTSILFGVLMEVIGVAWFY). Na(+)-binding residues include leucine 415, aspartate 418, and serine 419. The dopamine site is built by serine 419 and alanine 420. At 497-513 (GVWQFSDDIKQMTGRRP) the chain is on the cytoplasmic side. The helical transmembrane segment at 514 to 539 (SLYWRLCWKFVSPCFLLFVVVVSIAT) threads the bilayer. The Extracellular portion of the chain corresponds to 540-550 (FRPPHYGAYVF). The helical transmembrane segment at 551–580 (PEWATALGWAIAASSMSVVPIYAAYKLCSL) threads the bilayer. Positions 558–587 (GWAIAASSMSVVPIYAAYKLCSLPGSSREK) are interaction with TGFB1I1. Residues 581–693 (PGSSREKLAY…VESTGLCSVY (113 aa)) lie on the Cytoplasmic side of the membrane.

It belongs to the sodium:neurotransmitter symporter (SNF) (TC 2.A.22) family. SLC6A3 subfamily. As to quaternary structure, monomer. Homooligomer; disulfide-linked. Interacts with PRKCABP and TGFB1I1. Interacts (via N-terminus) with SYNGR3 (via N-terminus). Interacts with SLC18A2. Interacts with TOR1A (ATP-bound); TOR1A regulates SLC6A3 subcellular location. Interacts with alpha-synuclein/SNCA. Interacts with SEPTIN4. As to expression, expressed in the neurons of the substantia nigra of the brain.

The protein resides in the cell membrane. It is found in the cell projection. The protein localises to the neuron projection. Its subcellular location is the axon. It catalyses the reaction dopamine(out) + chloride(out) + Na(+)(out) = dopamine(in) + chloride(in) + Na(+)(in). It carries out the reaction (R)-noradrenaline(out) + chloride(out) + Na(+)(out) = (R)-noradrenaline(in) + chloride(in) + Na(+)(in). The catalysed reaction is dopamine(out) + chloride(out) + 2 Na(+)(out) = dopamine(in) + chloride(in) + 2 Na(+)(in). With respect to regulation, inhibited by GBR 12909 dihydrochloride, amphetamine and cocaine. Inhibited by zinc ions. Functionally, mediates sodium- and chloride-dependent transport of dopamine. Also mediates sodium- and chloride-dependent transport of norepinephrine (also known as noradrenaline). Regulator of light-dependent retinal hyaloid vessel regression, downstream of OPN5 signaling. In Bos taurus (Bovine), this protein is Sodium-dependent dopamine transporter (SLC6A3).